An 855-amino-acid chain; its full sequence is Mitofusin FZO1 (855 aa).

A compositionally biased stretch (basic and acidic residues) spans 1–19 (MSEGKQQFKDSNKPHKDST). Residues 1 to 27 (MSEGKQQFKDSNKPHKDSTDQDDDAAT) form a disordered region. Residues 1-705 (MSEGKQQFKD…PSLLFTSKIP (705 aa)) are Cytoplasmic-facing. Residues 91 to 190 (NYNNNRVLLK…KRVDDVSSKV (100 aa)) form an HRN region. The region spanning 184–467 (DDVSSKVFIT…KKRSLSKLLP (284 aa)) is the Dynamin-type G domain. Residues 197–202 (NTGKSA) and 370–373 (KKFD) each bind GTP. Residue Lys-398 forms a Glycyl lysine isopeptide (Lys-Gly) (interchain with G-Cter in ubiquitin) linkage. Ser-408 serves as a coordination point for GTP. Over residues 413 to 433 (ELPHYHNENDNEDHGDRKPDD) the composition is skewed to basic and acidic residues. The interval 413–447 (ELPHYHNENDNEDHGDRKPDDDPYSSSDPDPDFDS) is disordered. Lys-464 participates in a covalent cross-link: Glycyl lysine isopeptide (Lys-Gly) (interchain with G-Cter in ubiquitin). The tract at residues 484-547 (KSNMKMYSEE…KEALLNALDV (64 aa)) is HR1. The segment at 630-843 (GKRLKVSLSI…QSLYEGTVAQ (214 aa)) is required for interaction with UGO1. Residues 706–726 (TLTLYFLGSTKVVGNIILNGI) traverse the membrane as a helical segment. Residues 727 to 736 (KLSSWSSLKK) are Mitochondrial intermembrane-facing. The helical transmembrane segment at 737 to 757 (LSVPVIVVGSLLGLTYLIHDL) threads the bilayer. Residues 758 to 855 (PRALPMNLSI…MVEEINLDID (98 aa)) are Cytoplasmic-facing. The segment at 769 to 831 (YKRKLQELDY…KKESNLLSIK (63 aa)) is HR2. The stretch at 798 to 825 (TREILRSCEIIMDKKQITKKELENKKES) forms a coiled coil.

Belongs to the TRAFAC class dynamin-like GTPase superfamily. Dynamin/Fzo/YdjA family. Mitofusin subfamily. Homodimer. Dimerization depends on GTP binding. Component of a large multiprotein complex of 800 kDa. Binds the cytoplasmic domain of UGO1 which binds MGM1 through its intermembrane space domain. Interacts with MDM30. Interacts with UBP2 and UBP12. Interacts (when ubiquitinated) with DOA1; the interaction recruits FZO1 to CDC48 and promotes FZO1 proteasomal degradation. Ubiquitinated at Lys-398 and Lys-464. MDM30 and UGO1 are involved in ubiquitination. Deubiquitinated by UBP2 and UBP12. UBP2 and UBP12 recognize distinct ubiquitin chains on FZO1 that have opposing effects on mitochondrial fusion. UBP2 removes ubiquitin chains that initiate proteolysis of FZO1 and inhibit fusion. UBP12 recognizes ubiquitin chains that stabilize FZO1 and promote mitochondrial fusion. UBP12 deubiquitylates FZO1 only after oligomerization.

It is found in the mitochondrion outer membrane. It catalyses the reaction GTP + H2O = GDP + phosphate + H(+). Functionally, essential transmembrane GTPase, which mediates mitochondrial fusion. Fusion proceeds through several steps; first mitochondria are tethered together, then brought into close contact, followed by the formation of a docking ring around contact areas, and finally membrane fusion. Fusion of mitochondria occurs in many cell types and constitutes an important step in mitochondrial morphology, which is balanced between fusion and fission, mediated by FZO1 and DNM1, respectively. Functions antagonistically with DNM1. Probably acts by forming membrane contact sites that mediate mitochondrial membrane fusion. Mitochondrial docking and fusion requires GTP hydrolysis. Mitochondrial fusion also promotes increased lifespan. This is Mitofusin FZO1 (FZO1) from Saccharomyces cerevisiae (strain ATCC 204508 / S288c) (Baker's yeast).